The sequence spans 96 residues: Small ribosomal subunit protein bS6 (96 aa).

It belongs to the bacterial ribosomal protein bS6 family.

Binds together with bS18 to 16S ribosomal RNA. The protein is Small ribosomal subunit protein bS6 of Streptococcus gordonii (strain Challis / ATCC 35105 / BCRC 15272 / CH1 / DL1 / V288).